The chain runs to 229 residues: MQKKKAFNPLLYLTSIVFLSWSISFSFKKSMESLVIHWWNAEQSEVFLNDIQEKSALEKFIELEELLFLDEMIKESPDIHIQKLRIGIHKETIQLVKMYNEGHIHTILNFLTNIISFAILSVFYILGNEQLVILNSWVREFIYNLSDTIKAFCILLLTDLCIGFHSPHGWELMIGSVYKDFGFSHNNQIISGLVSTFPVILDTIFKYLIFRYLNRVSPSLVVIYHSIND.

4 consecutive transmembrane segments (helical) span residues 7 to 27 (FNPLLYLTSIVFLSWSISFSF), 107 to 127 (ILNFLTNIISFAILSVFYILG), 154 to 174 (ILLLTDLCIGFHSPHGWELMI), and 189 to 209 (IISGLVSTFPVILDTIFKYLI).

This sequence belongs to the CemA family.

It is found in the plastid. It localises to the chloroplast inner membrane. The enzyme catalyses K(+)(in) + H(+)(out) = K(+)(out) + H(+)(in). In terms of biological role, contributes to K(+)/H(+) antiport activity by supporting proton efflux to control proton extrusion and homeostasis in chloroplasts in a light-dependent manner to modulate photosynthesis. Prevents excessive induction of non-photochemical quenching (NPQ) under continuous-light conditions. Indirectly promotes efficient inorganic carbon uptake into chloroplasts. In Ranunculus macranthus (Large buttercup), this protein is Potassium/proton antiporter CemA.